Reading from the N-terminus, the 1031-residue chain is Error-prone DNA polymerase (1031 aa).

Belongs to the DNA polymerase type-C family. DnaE2 subfamily.

The protein localises to the cytoplasm. It carries out the reaction DNA(n) + a 2'-deoxyribonucleoside 5'-triphosphate = DNA(n+1) + diphosphate. DNA polymerase involved in damage-induced mutagenesis and translesion synthesis (TLS). It is not the major replicative DNA polymerase. The polypeptide is Error-prone DNA polymerase (Pseudomonas syringae pv. syringae (strain B728a)).